We begin with the raw amino-acid sequence, 143 residues long: Large ribosomal subunit protein uL11 (143 aa).

The protein belongs to the universal ribosomal protein uL11 family. Part of the ribosomal stalk of the 50S ribosomal subunit. Interacts with L10 and the large rRNA to form the base of the stalk. L10 forms an elongated spine to which L12 dimers bind in a sequential fashion forming a multimeric L10(L12)X complex. In terms of processing, one or more lysine residues are methylated.

Forms part of the ribosomal stalk which helps the ribosome interact with GTP-bound translation factors. The protein is Large ribosomal subunit protein uL11 of Rhizobium johnstonii (strain DSM 114642 / LMG 32736 / 3841) (Rhizobium leguminosarum bv. viciae).